The primary structure comprises 349 residues: N-formyl peptide receptor 3 (349 aa).

The Extracellular segment spans residues 1–27 (METNFSIPLNETEEVLPEPAGHTVLWI). N-linked (GlcNAc...) asparagine glycans are attached at residues Asn-4 and Asn-10. Residues 28–50 (FSLLVHGVTFIFGVLGNGLVIWV) form a helical membrane-spanning segment. The Cytoplasmic segment spans residues 51-61 (AGFLMTRTVNT). The helical transmembrane segment at 62–83 (ICYLNLALADFSFSAILPFHMV) threads the bilayer. Over 84–100 (SVAMREKWPFGSFLCKL) the chain is Extracellular. The cysteines at positions 98 and 176 are disulfide-linked. A helical membrane pass occupies residues 101–121 (VHVMIDINLFVSVYLITIIAL). At 122–140 (DRCICVLHPAWAQNHRTMS) the chain is on the cytoplasmic side. The chain crosses the membrane as a helical span at residues 141-162 (LAKRVMTGLWILTIVLTLPNFI). Residues 163–205 (FWTTISTTNGDTYCIFNFPFWGDTAVERLNVFITMAKVFLILH) are Extracellular-facing. The chain crosses the membrane as a helical span at residues 206–226 (FIIGFSMPMSIITVCYGIIAA). Topologically, residues 227-242 (KIHRNHMIKSSRPLRV) are cytoplasmic. A helical transmembrane segment spans residues 243-266 (FAAVVASFFICWFPYELIGILMAV). Residues 267-286 (WLKEMLLNGKYKIILVLINP) are Extracellular-facing. The chain crosses the membrane as a helical span at residues 287–306 (TSSLAFFNSCLNPILYVFLG). At 307–349 (SNFQERLIRSLPTSLERALTEVPDSAQTSNTHTTSASPPEETE) the chain is on the cytoplasmic side. Residues 327-349 (EVPDSAQTSNTHTTSASPPEETE) are disordered. Residues 331–343 (SAQTSNTHTTSAS) are compositionally biased toward polar residues.

Belongs to the G-protein coupled receptor 1 family.

The protein localises to the cell membrane. Its function is as follows. Low affinity receptor for N-formyl-methionyl peptides, which are powerful neutrophils chemotactic factors. Binding of FMLP to the receptor causes activation of neutrophils. This response is mediated via a G-protein that activates a phosphatidylinositol-calcium second messenger system. The polypeptide is N-formyl peptide receptor 3 (FPR3) (Gorilla gorilla gorilla (Western lowland gorilla)).